An 843-amino-acid chain; its full sequence is Protein P (843 aa).

The segment at 1 to 177 (MPLSYQHFRK…FCGSPYSWEQ (177 aa)) is terminal protein domain (TP). The segment at 178–346 (ELQHGRLVFQ…YCLTHIVNLL (169 aa)) is spacer. 2 disordered regions span residues 220–273 (QSRL…SSTS) and 289–316 (LSTSKRQSSSGHAVEFHNIPPSSARSQS). Positions 289 to 299 (LSTSKRQSSSG) are enriched in polar residues. Residues 347–690 (EDWGPCTEHG…YLNLYPVARQ (344 aa)) are polymerase/reverse transcriptase domain (RT). Positions 357–600 (EHNIRIPRTP…YSLNFMGYVI (244 aa)) constitute a Reverse transcriptase domain. Asp429, Asp551, and Asp552 together coordinate Mg(2+).

Belongs to the hepadnaviridae P protein family.

It carries out the reaction DNA(n) + a 2'-deoxyribonucleoside 5'-triphosphate = DNA(n+1) + diphosphate. It catalyses the reaction Endonucleolytic cleavage to 5'-phosphomonoester.. With respect to regulation, activated by host HSP70 and HSP40 in vitro to be able to bind the epsilon loop of the pgRNA. Because deletion of the RNase H region renders the protein partly chaperone-independent, the chaperones may be needed indirectly to relieve occlusion of the RNA-binding site by this domain. Inhibited by several reverse-transcriptase inhibitors: Lamivudine, Adefovir and Entecavir. Functionally, multifunctional enzyme that converts the viral RNA genome into dsDNA in viral cytoplasmic capsids. This enzyme displays a DNA polymerase activity that can copy either DNA or RNA templates, and a ribonuclease H (RNase H) activity that cleaves the RNA strand of RNA-DNA heteroduplexes in a partially processive 3'- to 5'-endonucleasic mode. Neo-synthesized pregenomic RNA (pgRNA) are encapsidated together with the P protein, and reverse-transcribed inside the nucleocapsid. Initiation of reverse-transcription occurs first by binding the epsilon loop on the pgRNA genome, and is initiated by protein priming, thereby the 5'-end of (-)DNA is covalently linked to P protein. Partial (+)DNA is synthesized from the (-)DNA template and generates the relaxed circular DNA (RC-DNA) genome. After budding and infection, the RC-DNA migrates in the nucleus, and is converted into a plasmid-like covalently closed circular DNA (cccDNA). The activity of P protein does not seem to be necessary for cccDNA generation, and is presumably released from (+)DNA by host nuclear DNA repair machinery. The polypeptide is Protein P (Hepatitis B virus genotype C subtype ad (isolate Japan/S-179/1988) (HBV-C)).